The primary structure comprises 609 residues: Glutamine--fructose-6-phosphate aminotransferase [isomerizing] (609 aa).

Residue Cys-2 is the Nucleophile; for GATase activity of the active site. In terms of domain architecture, Glutamine amidotransferase type-2 spans 2-218; sequence CGIVGAIAQR…EGDIAEITRR (217 aa). SIS domains follow at residues 286–426 and 458–599; these read ADEL…LKGL and LAED…VDQP. The active-site For Fru-6P isomerization activity is Lys-604.

In terms of assembly, homodimer.

Its subcellular location is the cytoplasm. The enzyme catalyses D-fructose 6-phosphate + L-glutamine = D-glucosamine 6-phosphate + L-glutamate. In terms of biological role, catalyzes the first step in hexosamine metabolism, converting fructose-6P into glucosamine-6P using glutamine as a nitrogen source. The protein is Glutamine--fructose-6-phosphate aminotransferase [isomerizing] of Salmonella typhimurium (strain LT2 / SGSC1412 / ATCC 700720).